Reading from the N-terminus, the 193-residue chain is Protein SINE3 (193 aa).

A disordered region spans residues 15–35 (SELGAKRLKDPEMKNRKVTTE). Over residues 18–35 (GAKRLKDPEMKNRKVTTE) the composition is skewed to basic and acidic residues. The KASH domain occupies 155 to 193 (VTVKFRIVLLSFILWAILAAIVVFFSSGEERAYRGPLPT). The helical transmembrane segment at 161–181 (IVLLSFILWAILAAIVVFFSS) threads the bilayer. The Required for nuclear localization signature appears at 190 to 193 (PLPT).

As to quaternary structure, interacts with SUN1 and SUN2.

The protein localises to the nucleus membrane. This Arabidopsis thaliana (Mouse-ear cress) protein is Protein SINE3.